The following is a 72-amino-acid chain: Translation initiation factor IF-1 (72 aa).

The S1-like domain occupies 1–72; sequence MPKEEVLEFP…TKGRITYRFK (72 aa).

It belongs to the IF-1 family. Component of the 30S ribosomal translation pre-initiation complex which assembles on the 30S ribosome in the order IF-2 and IF-3, IF-1 and N-formylmethionyl-tRNA(fMet); mRNA recruitment can occur at any time during PIC assembly.

It localises to the cytoplasm. Its function is as follows. One of the essential components for the initiation of protein synthesis. Stabilizes the binding of IF-2 and IF-3 on the 30S subunit to which N-formylmethionyl-tRNA(fMet) subsequently binds. Helps modulate mRNA selection, yielding the 30S pre-initiation complex (PIC). Upon addition of the 50S ribosomal subunit IF-1, IF-2 and IF-3 are released leaving the mature 70S translation initiation complex. This is Translation initiation factor IF-1 from Chelativorans sp. (strain BNC1).